The chain runs to 88 residues: Large ribosomal subunit protein bL27 (88 aa).

Residues 1–24 (MAHKKGTGSTRNGRDSNSKRLGVK) are disordered.

It belongs to the bacterial ribosomal protein bL27 family.

In Prochlorococcus marinus (strain MIT 9313), this protein is Large ribosomal subunit protein bL27.